We begin with the raw amino-acid sequence, 392 residues long: Keratin, type I cuticular Ha4 (392 aa).

A head region spans residues 1-56; sequence MSCESCLPALSCRTSCSSRPCVPPSCHGCTLPGACNIPANVGNCNWFCEGSFNGNE. Positions 56 to 367 constitute an IF rod domain; the sequence is EKETMQFLND…SLLESEDCNL (312 aa). The coil 1A stretch occupies residues 57–91; that stretch reads KETMQFLNDRLASYMEKVRQLERENAELECRIQER. Residues 92-102 are linker 1; sequence NQQQDPLVCPA. The interval 103–203 is coil 1B; the sequence is YQAYFRTIEE…HEEEVNTLRC (101 aa). The linker 12 stretch occupies residues 204–219; sequence QLGDRLNVEVDAAPTV. Residues 220–363 are coil 2; that stretch reads DLNRVLNETR…NTYRSLLESE (144 aa). The interval 364 to 392 is tail; it reads DCNLPCNPCATTNASGSCCGPCGSSKRCC.

Belongs to the intermediate filament family. Expressed in the hair root in the hair shaft cuticle and cortex.

The protein is Keratin, type I cuticular Ha4 of Mus musculus (Mouse).